The sequence spans 224 residues: Jacalin-related lectin 24 (224 aa).

The Jacalin-type lectin domain occupies 8–160 (MFKVGPIGSK…LTSIGIYVYP (153 aa)).

The protein belongs to the jacalin lectin family.

The protein is Jacalin-related lectin 24 (JAL24) of Arabidopsis thaliana (Mouse-ear cress).